Here is an 899-residue protein sequence, read N- to C-terminus: Protein suppressor of hairy wing (899 aa).

Disordered stretches follow at residues 1 to 33 (MSAQEDALPATPPASSSIKISDGDKPKEKRTGT), 45 to 127 (AAVA…KKMD), and 171 to 206 (AKENGEEFVVSGVDEDDDDDDDDEDEGVVEGGAKRR). Basic and acidic residues predominate over residues 21-31 (SDGDKPKEKRT). Positions 45–55 (AAVASKGASVS) are enriched in low complexity. 2 stretches are compositionally biased toward polar residues: residues 67-83 (KILNNNNNDEAQTSTKG) and 102-111 (RSSAPASSAV). Acidic residues predominate over residues 183-198 (VDEDDDDDDDDEDEGV). Residues 218–240 (HVCGKCYKTFRRVKSLKKHLEFC) form a C2H2-type 1; atypical zinc finger. The C2H2-type 2 zinc finger occupies 288–311 (INCPDCPKSFKTQTSYERHIFITH). The segment at 318–340 (YPCSICNAKLRSGALLKLHEQQH) adopts a C2H2-type 3; atypical zinc-finger fold. C2H2-type zinc fingers lie at residues 347–365 (FACKICGKDFMCSYHLKCH), 379–401 (MSCKVCDRVFYRLDNLCAHLKQH), 412–434 (YMCHVCKNCFYSLSTLNIHIRTH), 440–462 (FDCDLCDKKFSALVALKKHRRYH), 468–490 (YTCTVCSQSFAVKEVLNRHMKRH), 496–518 (HKCNECGKSFIQATQLRTHSKTH), 522–544 (YACSLCIQKFKTEKQLERHVKDH), 552–576 (FACTECTRSFRTSALLKEHLDAGDH), and 594–617 (TDCAICDKNFDTTETLRNHIRSVH). Disordered stretches follow at residues 646–665 (EQKEQEDDVPARNTSAGSLI), 702–734 (PLEGDKATESTAETDIKAESSKEKPSVSPVVKK), and 865–899 (GDEDQDQDQETDKGKDREADNTDTDTREDAVESEA). Over residues 874–899 (ETDKGKDREADNTDTDTREDAVESEA) the composition is skewed to basic and acidic residues.

It is found in the nucleus. Functionally, component of the gypsy chromatin insulator complex which is required for the function of the gypsy chromatin insulator and other endogenous chromatin insulators. Chromatin insulators are regulatory elements which establish independent domains of transcriptional activity within eukaryotic genomes. Insulators have two defining properties; they can block the communication between an enhancer and a promoter when placed between them and can also buffer transgenes from position effect variegation (PEV). Insulators are proposed to structure the chromatin fiber into independent domains of differing transcriptional potential by promoting the formation of distinct chromatin loops. This chromatin looping may involve the formation of insulator bodies, where homotypic interactions between individual subunits of the insulator complex could promote the clustering of widely spaced insulators at the nuclear periphery. Within the gypsy insulator complex, this protein binds specifically to a region of the gypsy element located 3' of the 5' long terminal repeat (LTR), and may also mediate interaction with other endogenous insulators at sites distinct from those recognized by Cp190. Cooperates with pita and cliff to recruit Cp190 and regulate insulator function at the front-ultraabdominal (Fub) boundary. This is Protein suppressor of hairy wing (su(Hw)) from Drosophila virilis (Fruit fly).